The primary structure comprises 153 residues: Nucleoside diphosphate kinase (153 aa).

Lys13, Phe61, Arg89, Thr95, Arg106, and Asn116 together coordinate ATP. The active-site Pros-phosphohistidine intermediate is His119.

This sequence belongs to the NDK family. Homohexamer. It depends on Mg(2+) as a cofactor.

The protein resides in the cytoplasm. It carries out the reaction a 2'-deoxyribonucleoside 5'-diphosphate + ATP = a 2'-deoxyribonucleoside 5'-triphosphate + ADP. The catalysed reaction is a ribonucleoside 5'-diphosphate + ATP = a ribonucleoside 5'-triphosphate + ADP. In terms of biological role, major role in the synthesis of nucleoside triphosphates other than ATP. The ATP gamma phosphate is transferred to the NDP beta phosphate via a ping-pong mechanism, using a phosphorylated active-site intermediate. This chain is Nucleoside diphosphate kinase (NDK), found in Brugia malayi (Filarial nematode worm).